A 740-amino-acid polypeptide reads, in one-letter code: ATP-dependent RNA helicase DDX1 (740 aa).

Positions 1–448 are interaction with dsRNA; the sequence is MAAFSEMGVM…ETVHHVVVPV (448 aa). The Helicase ATP-binding domain occupies 2-428; the sequence is AAFSEMGVMP…SEKIMHFPTW (427 aa). 46–53 lines the ATP pocket; that stretch reads AETGSGKT. The B30.2/SPRY domain maps to 70-247; sequence DQQEGKKGKA…LKFNFGEEDF (178 aa). The DEAD box signature appears at 370-373; sequence DEAD. In terms of domain architecture, Helicase C-terminal spans 493 to 681; that stretch reads KGEYIVRAIK…QVEPDIKVPL (189 aa).

This sequence belongs to the DEAD box helicase family. DDX1 subfamily.

The protein localises to the nucleus. Its subcellular location is the cytoplasm. It is found in the cytoplasmic granule. The protein resides in the cytosol. It localises to the mitochondrion. The catalysed reaction is ATP + H2O = ADP + phosphate + H(+). Functionally, acts as an ATP-dependent RNA helicase, able to unwind both RNA-RNA and RNA-DNA duplexes. Possesses 5' single-stranded RNA overhang nuclease activity. Acts as a positive regulator of transcription. May be involved in 3'-end cleavage and polyadenylation of pre-mRNAs. Binds DNA and RNA. Component of the tRNA-splicing ligase complex required to facilitate the enzymatic turnover of catalytic subunit rtcb. Binds (via helicase ATP-binding domain) on both short and long poly(I:C) dsRNA. This is ATP-dependent RNA helicase DDX1 (ddx1) from Xenopus laevis (African clawed frog).